Here is a 67-residue protein sequence, read N- to C-terminus: uncharacterized protein (67 aa).

The chain crosses the membrane as a helical span at residues 4–24 (WIFAILMLGVAIVLSIIATFF).

Its subcellular location is the membrane. This is an uncharacterized protein from Bacillus anthracis.